Reading from the N-terminus, the 750-residue chain is MIIRSPEPEVKIVVDRDPVKTSFEEWARPGHFSRTLAKGPDTTTWIWNLHADAHDFDSHTGDLEEISRKVFSAHFGQLSIIFLWLSGMYFHGARFSNYEAWLSDPTHIGPSAQVVWPIVGQEILNGDVGGGFRGIQITSGFFQLWRASGITSELQLYCTAIGALIFAALMLFAGWFHYHKAAPKLAWFQDVESMLNHHLAGLLGLGSLSWAGHQIHVSLPINQFLDAGVDPKEIPLPHEFILNRDLLAQLYPSFAEGATPFFTLNWSKYAEFLTFRGGLDPVTGGLWLTDIAHHHLAIAILFLIAGHMYRTNWGIGHGLKDILEAHKGPFTGQGHKGLYEILTTSWHAQLSLNLAMLGSTTIVVAHHMYSMPPYPYLATDYGTQLSLFTHHMWIGGFLIVGAAAHAAIFMVRDYDPTTRYNDLLDRVLRHRDAIISHLNWVCIFLGFHSFGLYIHNDTMSALGRPQDMFSDTAIQLQPIFAQWVQNIHATAPGVTAPGATTSTSLTWGGGELVAVGGKVALLPIPLGTADFLVHHIHAFTIHVTVLILLKGVLFARSSRLIPDKANLGFRFPCDGPGRGGTCQVSAWDHVFLGLFWMYNAISVVIFHFSWKMQSDVWGTISDQGVVTHITGGNFAQSSITINGWLRDFLWAQASQVIQSYGSSLSAYGLFFLGAHFVWAFSLMFLFSGRGYWQELIESIVWAHNKLKVAPATQPRALSIIQGRAVGVTHYLLGGIATTWAFFLARIIAVG.

8 helical membrane passes run 70–93 (VFSAHFGQLSIIFLWLSGMYFHGA), 156–179 (LYCTAIGALIFAALMLFAGWFHYH), 195–219 (LNHHLAGLLGLGSLSWAGHQIHVSL), 291–309 (IAHHHLAIAILFLIAGHMY), 346–369 (WHAQLSLNLAMLGSTTIVVAHHMY), 385–411 (LSLFTHHMWIGGFLIVGAAAHAAIFMV), 433–455 (AIISHLNWVCIFLGFHSFGLYIH), and 531–549 (FLVHHIHAFTIHVTVLILL). 2 residues coordinate [4Fe-4S] cluster: Cys573 and Cys582. 2 helical membrane-spanning segments follow: residues 589–610 (HVFLGLFWMYNAISVVIFHFSW) and 664–686 (LSAYGLFFLGAHFVWAFSLMFLF). His675 serves as a coordination point for chlorophyll a'. 2 residues coordinate chlorophyll a: Met683 and Tyr691. Trp692 is a phylloquinone binding site. The chain crosses the membrane as a helical span at residues 724–744 (AVGVTHYLLGGIATTWAFFLA).

It belongs to the PsaA/PsaB family. As to quaternary structure, the PsaA/B heterodimer binds the P700 chlorophyll special pair and subsequent electron acceptors. PSI consists of a core antenna complex that captures photons, and an electron transfer chain that converts photonic excitation into a charge separation. The eukaryotic PSI reaction center is composed of at least 11 subunits. P700 is a chlorophyll a/chlorophyll a' dimer, A0 is one or more chlorophyll a, A1 is one or both phylloquinones and FX is a shared 4Fe-4S iron-sulfur center. is required as a cofactor.

It localises to the plastid. The protein resides in the chloroplast thylakoid membrane. The catalysed reaction is reduced [plastocyanin] + hnu + oxidized [2Fe-2S]-[ferredoxin] = oxidized [plastocyanin] + reduced [2Fe-2S]-[ferredoxin]. Functionally, psaA and PsaB bind P700, the primary electron donor of photosystem I (PSI), as well as the electron acceptors A0, A1 and FX. PSI is a plastocyanin-ferredoxin oxidoreductase, converting photonic excitation into a charge separation, which transfers an electron from the donor P700 chlorophyll pair to the spectroscopically characterized acceptors A0, A1, FX, FA and FB in turn. Oxidized P700 is reduced on the lumenal side of the thylakoid membrane by plastocyanin. The chain is Photosystem I P700 chlorophyll a apoprotein A1 from Triticum aestivum (Wheat).